The sequence spans 326 residues: GTPase IMAP family member 5 (326 aa).

At M1–D297 the chain is on the cytoplasmic side. The region spanning S42–Q245 is the AIG1-type G domain. Residues G51–A59, S72, H169–E171, and N206 each bind GTP. Residues W298–I318 form a helical; Anchor for type IV membrane protein membrane-spanning segment. Topologically, residues N319–K326 are lumenal.

This sequence belongs to the TRAFAC class TrmE-Era-EngA-EngB-Septin-like GTPase superfamily. AIG1/Toc34/Toc159-like paraseptin GTPase family. IAN subfamily. As to quaternary structure, interacts with BAD, BAK1, BAX, BCL2, BCL2L1/Bcl-xL and BCL2L11/BimEL. The interaction with BAX is increased, when cells initiate apoptosis upon IL2 withdrawal. Forms a complex with BCL2L1 or MCL1 and HSPA8/HSC70; the interaction between HSPA8 and BCL2L1 or MCL1 is impaired in the absence of GIMAP5. May interact (via N-terminus) with microtubules. Primarily expressed in spleen, heart, lung and intestine and, at lower levels, in kidney, stomach and muscle. Expressed in thymus and lymph nodes (at protein level). In the spleen, expressed in periarteriolar lymphatic sheets. Isoform 2: Expressed at higher levels in T lymphocytes compared to isoform 1.

The protein resides in the lysosome membrane. The protein localises to the endosome. It is found in the multivesicular body membrane. Its subcellular location is the endosome membrane. Functionally, required for mitochondrial integrity and T-cell survival. May contribute to T-cell quiescence. Its function is as follows. Plays a role in T lymphocyte development and the optimal generation of CD4/CD8 double-positive thymocytes. Inhibitor of GSK3A, possibly by sequestering GSK3A in cytoplasmic vesicles and impairing its translocation to the nucleus. Consequently, impairs GSK3A-dependent transcriptional program and regulation of the DNA damage response occurring during T cells proliferation. Required for the survival of peripheral T cells, natural killer (NK) and NK T-cell development and the maintenance of normal liver function. Promotes the survival of quiescent T-cells. May regulate Ca(2+) homeostasis by modulating lysosomal Ca(2+) stores, preventing its accumulation in the absence of T cell activation. May play a role in mitochondrial DNA segregation in hematopoietic tissues. Is a regulator of liver endothelial cell homeostasis. The sequence is that of GTPase IMAP family member 5 (Gimap5) from Rattus norvegicus (Rat).